Reading from the N-terminus, the 109-residue chain is ATP-dependent Clp protease adapter protein ClpS 2 (109 aa).

The disordered stretch occupies residues 1–24 (MAGDGGRSGPSTPSTSVITKTKPR).

It belongs to the ClpS family. As to quaternary structure, binds to the N-terminal domain of the chaperone ClpA.

Its function is as follows. Involved in the modulation of the specificity of the ClpAP-mediated ATP-dependent protein degradation. This is ATP-dependent Clp protease adapter protein ClpS 2 from Rhodopseudomonas palustris (strain ATCC BAA-98 / CGA009).